The sequence spans 393 residues: Bifunctional chrysanthemol synthase, chloroplastic (393 aa).

Low complexity predominate over residues 1–18 (MACSSSLSSKWASWGASS). Residues 1-22 (MACSSSLSSKWASWGASSRPHP) are disordered. A chloroplast-targeting transit peptide spans 1-53 (MACSSSLSSKWASWGASSRPHPSVQPFVTRKNVVRYHKPTSELSYSPLTTTLS). Residues K99, R102, and Q137 each coordinate dimethylallyl diphosphate. Residues D144 and D148 each coordinate Mg(2+). Residues R153, R154, K241, Q280, D287, K297, and K306 each contribute to the dimethylallyl diphosphate site.

Belongs to the FPP/GGPP synthase family. Requires Mg(2+) as cofactor. Restricted to glandular trichomes during achene maturation. Expressed in flowers and in both ray and disk florets.

The protein localises to the plastid. It is found in the chloroplast. It catalyses the reaction 2 dimethylallyl diphosphate = (R,R)-chrysanthemyl diphosphate + diphosphate. The enzyme catalyses (R,R)-chrysanthemyl diphosphate + H2O = (R,R)-chrysanthemol + diphosphate. The catalysed reaction is (R)-lavandulyl diphosphate + H2O = (R)-lavandulol + diphosphate. The protein operates within isoprenoid biosynthesis. In terms of biological role, component of the monoterpenoid pyrethrins biosynthesis; pyrethrins are widely used plant-derived pesticide. Catalyzes the condensation of two molecules of dimethylallyl diphosphate to produce chrysanthemyl diphosphate (CPP), a monoterpene with a non-head-to-tail or irregular c1'-2-3 linkage between isoprenoid units. In a second step, hydrolyzes the diphosphate moiety of CPP to form chrysanthemol. With a lower efficiency, can also converts dimethylallyl diphosphate into lavandulyl diphosphate (LPP), and subsequently LPP into lavandulol. The protein is Bifunctional chrysanthemol synthase, chloroplastic of Tanacetum cinerariifolium (Dalmatian daisy).